The sequence spans 318 residues: Thymidylate synthase (318 aa).

DUMP contacts are provided by residues arginine 25 and 180–181 (RR). Cysteine 200 acts as the Nucleophile in catalysis. DUMP is bound by residues 220–223 (RSGD), asparagine 231, and 261–263 (HIY). Aspartate 223 lines the (6R)-5,10-methylene-5,6,7,8-tetrahydrofolate pocket. Residue alanine 317 coordinates (6R)-5,10-methylene-5,6,7,8-tetrahydrofolate.

Belongs to the thymidylate synthase family. Bacterial-type ThyA subfamily. Homodimer.

Its subcellular location is the cytoplasm. The enzyme catalyses dUMP + (6R)-5,10-methylene-5,6,7,8-tetrahydrofolate = 7,8-dihydrofolate + dTMP. The protein operates within pyrimidine metabolism; dTTP biosynthesis. Catalyzes the reductive methylation of 2'-deoxyuridine-5'-monophosphate (dUMP) to 2'-deoxythymidine-5'-monophosphate (dTMP) while utilizing 5,10-methylenetetrahydrofolate (mTHF) as the methyl donor and reductant in the reaction, yielding dihydrofolate (DHF) as a by-product. This enzymatic reaction provides an intracellular de novo source of dTMP, an essential precursor for DNA biosynthesis. The polypeptide is Thymidylate synthase (Lactobacillus johnsonii (strain CNCM I-12250 / La1 / NCC 533)).